Reading from the N-terminus, the 201-residue chain is Holliday junction branch migration complex subunit RuvA (201 aa).

Residues 1-63 (MIEYIKGEIA…EDAYVLYGFA (63 aa)) form a domain I region. A domain II region spans residues 64–142 (DKQERELFLL…TGAMAATAVG (79 aa)). The flexible linker stretch occupies residues 143 to 153 (GAAGALLPAMN). Positions 153 to 201 (NAEVQEEAIAALTMLGFAAAPSQKAVLAILKEEPDAPVEKVIKLALKRL) are domain III.

This sequence belongs to the RuvA family. Homotetramer. Forms an RuvA(8)-RuvB(12)-Holliday junction (HJ) complex. HJ DNA is sandwiched between 2 RuvA tetramers; dsDNA enters through RuvA and exits via RuvB. An RuvB hexamer assembles on each DNA strand where it exits the tetramer. Each RuvB hexamer is contacted by two RuvA subunits (via domain III) on 2 adjacent RuvB subunits; this complex drives branch migration. In the full resolvosome a probable DNA-RuvA(4)-RuvB(12)-RuvC(2) complex forms which resolves the HJ.

Its subcellular location is the cytoplasm. Its function is as follows. The RuvA-RuvB-RuvC complex processes Holliday junction (HJ) DNA during genetic recombination and DNA repair, while the RuvA-RuvB complex plays an important role in the rescue of blocked DNA replication forks via replication fork reversal (RFR). RuvA specifically binds to HJ cruciform DNA, conferring on it an open structure. The RuvB hexamer acts as an ATP-dependent pump, pulling dsDNA into and through the RuvAB complex. HJ branch migration allows RuvC to scan DNA until it finds its consensus sequence, where it cleaves and resolves the cruciform DNA. This is Holliday junction branch migration complex subunit RuvA from Bacteroides fragilis (strain ATCC 25285 / DSM 2151 / CCUG 4856 / JCM 11019 / LMG 10263 / NCTC 9343 / Onslow / VPI 2553 / EN-2).